The chain runs to 535 residues: Bifunctional purine biosynthesis protein PurH (535 aa).

The MGS-like domain occupies 6–151 (TRLPIRRALI…KNHKDVAIVV (146 aa)).

It belongs to the PurH family.

The catalysed reaction is (6R)-10-formyltetrahydrofolate + 5-amino-1-(5-phospho-beta-D-ribosyl)imidazole-4-carboxamide = 5-formamido-1-(5-phospho-D-ribosyl)imidazole-4-carboxamide + (6S)-5,6,7,8-tetrahydrofolate. It carries out the reaction IMP + H2O = 5-formamido-1-(5-phospho-D-ribosyl)imidazole-4-carboxamide. Its pathway is purine metabolism; IMP biosynthesis via de novo pathway; 5-formamido-1-(5-phospho-D-ribosyl)imidazole-4-carboxamide from 5-amino-1-(5-phospho-D-ribosyl)imidazole-4-carboxamide (10-formyl THF route): step 1/1. It functions in the pathway purine metabolism; IMP biosynthesis via de novo pathway; IMP from 5-formamido-1-(5-phospho-D-ribosyl)imidazole-4-carboxamide: step 1/1. In Pseudomonas entomophila (strain L48), this protein is Bifunctional purine biosynthesis protein PurH.